Reading from the N-terminus, the 280-residue chain is MNVKAYAKVNISLDVIGKREDGYHLLKMIMQSINLYDVLDIRIIDEGIKITSNRRNIPTNDKNIAYRAAKLFMDTYKIDKGISIHINKRIPVAAGLAGGSADGAAVLKAMRDIFKKDVSDEELINLGVKIGADIPFCIVGGTAFCEGIGEKITKLRSMNGKIIVLVKPDFGVSTKMVYTEYDKCLDVKHPDSEGLVKAVNNGHFKFVVNNMVNVLENVTAVKYKEINEIKEKALEYNSIGTMMSGSGPTVFSFFDNTKEAEKYFYEMKKEYNKVFITRTV.

Lys-8 is an active-site residue. An ATP-binding site is contributed by 91 to 101; it reads PVAAGLAGGSA. Asp-133 is a catalytic residue.

This sequence belongs to the GHMP kinase family. IspE subfamily.

The catalysed reaction is 4-CDP-2-C-methyl-D-erythritol + ATP = 4-CDP-2-C-methyl-D-erythritol 2-phosphate + ADP + H(+). It participates in isoprenoid biosynthesis; isopentenyl diphosphate biosynthesis via DXP pathway; isopentenyl diphosphate from 1-deoxy-D-xylulose 5-phosphate: step 3/6. Its function is as follows. Catalyzes the phosphorylation of the position 2 hydroxy group of 4-diphosphocytidyl-2C-methyl-D-erythritol. This chain is 4-diphosphocytidyl-2-C-methyl-D-erythritol kinase, found in Clostridium acetobutylicum (strain ATCC 824 / DSM 792 / JCM 1419 / IAM 19013 / LMG 5710 / NBRC 13948 / NRRL B-527 / VKM B-1787 / 2291 / W).